The primary structure comprises 490 residues: E3 ubiquitin-protein ligase Hakai (490 aa).

The segment at 34–60 (QANKAKPAPRTQRTINRMPAKAPPGDE) is disordered. An RING-type zinc finger spans residues 108–148 (CDKCGLPIKIYGRMIPCKHVFCYDCAILHEKKGDKMCPGCS). The tract at residues 147–205 (CSDPVQRIEQCTRGSLFMCSIVQGCKRTYLSQRDLQAHINHRHMRAGKPVTRASLENVH) is HYB domain. The C2H2-type zinc-finger motif lies at 163–189 (FMCSIVQGCKRTYLSQRDLQAHINHRH). Residues S200, S284, and S289 each carry the phosphoserine modification. The segment at 254 to 490 (QPHEDIRAPP…DQTRYRPYYQ (237 aa)) is disordered. Pro residues-rich tracts occupy residues 341-358 (APPP…PHPP), 371-388 (APPP…PPPG), and 398-422 (MNHP…PPHH). Polar residues predominate over residues 426–441 (NSLPQFTEDQGTLSPP). Over residues 456–477 (PRGPPPPPRLQGPPSQTPLPGP) the composition is skewed to pro residues.

It belongs to the Hakai family. In terms of assembly, homodimer. Interacts with tyrosine-phosphorylated SRC substrates. Component of the WMM complex, a N6-methyltransferase complex composed of a catalytic subcomplex, named MAC, and of an associated subcomplex, named MACOM. The MAC subcomplex is composed of METTL3 and METTL14. The MACOM subcomplex is composed of WTAP, ZC3H13, CBLL1/HAKAI, VIRMA, and, in some cases of RBM15 (RBM15 or RBM15B). Also a component of a MACOM-like complex, named WTAP complex, composed of WTAP, ZC3H13, CBLL1, VIRMA, RBM15, BCLAF1 and THRAP3. Post-translationally, phosphorylated on tyrosine residues.

The protein resides in the nucleus speckle. It is found in the nucleus. The protein localises to the nucleoplasm. Its subcellular location is the cytoplasm. It carries out the reaction S-ubiquitinyl-[E2 ubiquitin-conjugating enzyme]-L-cysteine + [acceptor protein]-L-lysine = [E2 ubiquitin-conjugating enzyme]-L-cysteine + N(6)-ubiquitinyl-[acceptor protein]-L-lysine.. It functions in the pathway protein modification; protein ubiquitination. In terms of biological role, E3 ubiquitin-protein ligase that mediates ubiquitination of several tyrosine-phosphorylated Src substrates, including CDH1, CTTN and DOK1. Targets CDH1 for endocytosis and degradation. Associated component of the WMM complex, a complex that mediates N6-methyladenosine (m6A) methylation of RNAs, a modification that plays a role in the efficiency of mRNA splicing and RNA processing. Its function in the WMM complex is unknown. In Macaca fascicularis (Crab-eating macaque), this protein is E3 ubiquitin-protein ligase Hakai.